Here is a 515-residue protein sequence, read N- to C-terminus: Maturase K (515 aa).

Belongs to the intron maturase 2 family. MatK subfamily.

Its subcellular location is the plastid. It is found in the chloroplast. In terms of biological role, usually encoded in the trnK tRNA gene intron. Probably assists in splicing its own and other chloroplast group II introns. The sequence is that of Maturase K from Picea engelmannii (Engelmann's spruce).